The primary structure comprises 147 residues: Cyanate hydratase (147 aa).

Residues arginine 88, glutamate 91, and serine 114 contribute to the active site.

The protein belongs to the cyanase family.

The catalysed reaction is cyanate + hydrogencarbonate + 3 H(+) = NH4(+) + 2 CO2. In terms of biological role, catalyzes the reaction of cyanate with bicarbonate to produce ammonia and carbon dioxide. The protein is Cyanate hydratase of Parasynechococcus marenigrum (strain WH8102).